The following is a 271-amino-acid chain: Glutamate racemase (271 aa).

Substrate is bound by residues 13–14 (DS) and 45–46 (YG). Cys-77 serves as the catalytic Proton donor/acceptor. 78–79 (NT) contributes to the substrate binding site. Catalysis depends on Cys-192, which acts as the Proton donor/acceptor. Substrate is bound at residue 193-194 (TH).

The protein belongs to the aspartate/glutamate racemases family.

It catalyses the reaction L-glutamate = D-glutamate. It functions in the pathway cell wall biogenesis; peptidoglycan biosynthesis. Functionally, provides the (R)-glutamate required for cell wall biosynthesis. The protein is Glutamate racemase of Sinorhizobium medicae (strain WSM419) (Ensifer medicae).